The sequence spans 482 residues: MSAFVRVVPRISRSSVLTRSLRLQLRCYASYPEHTIIGMPALSPTMTQGNLAAWTKKEGDQLSPGEVIAEIETDKAQMDFEFQEDGYLAKILVPEGTKDIPVNKPIAVYVEDKADVPAFKDFKLEDSGSDSKTSTKAQPAEPQAEKKQEAPAEETKTSAPEAKKSDVAAPQGRIFASPLAKTIALEKGISLKDVHGTGPRGRITKADIESYLEKSSKQSSQTSGAAAATPAAATSSTTAGSAPSPSSTASYEDVPISTMRSIIGERLLQSTQGIPSYIVSSKISISKLLKLRQSLNATANDKYKLSINDLLVKAITVAAKRVPDANAYWLPNENVIRKFKNVDVSVAVATPTGLLTPIVKNCEAKGLSQISNEIKELVKRARINKLAPEEFQGGTICISNMGMNNAVNMFTSIINPPQSTILAIATVERVAVEDAAAENGFSFDNQVTITGTFDHRTIDGAKGAEFMKELKTVIENPLEMLL.

Residues 1 to 28 (MSAFVRVVPRISRSSVLTRSLRLQLRCY) constitute a mitochondrion transit peptide. Residues 34–110 (HTIIGMPALS…PVNKPIAVYV (77 aa)) enclose the Lipoyl-binding domain. An N6-lipoyllysine modification is found at Lys-75. The interval 122-170 (FKLEDSGSDSKTSTKAQPAEPQAEKKQEAPAEETKTSAPEAKKSDVAAP) is disordered. Positions 143 to 166 (QAEKKQEAPAEETKTSAPEAKKSD) are enriched in basic and acidic residues. One can recognise a Peripheral subunit-binding (PSBD) domain in the interval 175–212 (FASPLAKTIALEKGISLKDVHGTGPRGRITKADIESYL). The disordered stretch occupies residues 214-251 (KSSKQSSQTSGAAAATPAAATSSTTAGSAPSPSSTASY). A compositionally biased stretch (low complexity) spans 217-250 (KQSSQTSGAAAATPAAATSSTTAGSAPSPSSTAS). Residues His-455 and Asp-459 contribute to the active site.

Belongs to the 2-oxoacid dehydrogenase family. Eukaryotic pyruvate dehydrogenase (PDH) complexes are organized as a core consisting of the oligomeric dihydrolipoamide acetyl-transferase (E2), around which are arranged multiple copies of pyruvate dehydrogenase (E1), dihydrolipoamide dehydrogenase (E3) and protein X (E3BP) bound by non-covalent bonds. (R)-lipoate is required as a cofactor.

Its subcellular location is the mitochondrion matrix. It carries out the reaction N(6)-[(R)-dihydrolipoyl]-L-lysyl-[protein] + acetyl-CoA = N(6)-[(R)-S(8)-acetyldihydrolipoyl]-L-lysyl-[protein] + CoA. In terms of biological role, the pyruvate dehydrogenase complex catalyzes the overall conversion of pyruvate to acetyl-CoA and CO(2). This Saccharomyces cerevisiae (strain ATCC 204508 / S288c) (Baker's yeast) protein is Dihydrolipoyllysine-residue acetyltransferase component of pyruvate dehydrogenase complex, mitochondrial (LAT1).